The primary structure comprises 199 residues: Probable cobalt-precorrin-6B C(15)-methyltransferase (decarboxylating) (199 aa).

Residues Thr-24, 48 to 52 (GCGTG), Asp-72, and Ala-101 contribute to the S-adenosyl-L-methionine site.

This sequence belongs to the methyltransferase superfamily. Archaeal-type CbiT family.

The enzyme catalyses Co-precorrin-6B + S-adenosyl-L-methionine = Co-precorrin-7 + S-adenosyl-L-homocysteine + CO2. It functions in the pathway cofactor biosynthesis; adenosylcobalamin biosynthesis; cob(II)yrinate a,c-diamide from sirohydrochlorin (anaerobic route): step 8/10. Catalyzes the methylation of C-15 in cobalt-precorrin-6B followed by the decarboxylation of C-12 to form cobalt-precorrin-7. The polypeptide is Probable cobalt-precorrin-6B C(15)-methyltransferase (decarboxylating) (Saccharolobus islandicus (strain L.S.2.15 / Lassen #1) (Sulfolobus islandicus)).